A 466-amino-acid chain; its full sequence is Alpha-galacturonidase (466 aa).

Position 11-78 (11-78) interacts with NAD(+); that stretch reads VKIAYIGGGS…GKWNYETANT (68 aa). Substrate is bound at residue Asn157. A Mn(2+)-binding site is contributed by Cys179. The active-site Proton donor is the His180. His216 is a Mn(2+) binding site.

It belongs to the glycosyl hydrolase 4 family. As to quaternary structure, homotetramer. It depends on NAD(+) as a cofactor. Requires Mn(2+) as cofactor.

The enzyme catalyses [(1-&gt;4)-alpha-D-galacturonosyl](n) + H2O = alpha-D-galacturonate + [(1-&gt;4)-alpha-D-galacturonosyl](n-1). Its function is as follows. Alpha-galacturonidase able to catalyze the hydrolysis of the chromogenic substrate p-nitrophenyl-alpha-D-galacturonic acid (pNPalphaGalUA). It is probable that alpha-1,4-di-galacturonate (GalUA(2)) is the naturally occurring substrate. The polypeptide is Alpha-galacturonidase (Lachnoclostridium phytofermentans (strain ATCC 700394 / DSM 18823 / ISDg) (Clostridium phytofermentans)).